A 302-amino-acid polypeptide reads, in one-letter code: Beta-casein (302 aa).

The N-terminal stretch at 1–15 (MKLLILTCLVALGFA) is a signal peptide. A phosphoserine mark is found at Ser-23 and Ser-25. 16 tandem repeats follow at residues 144-151 (KREMLPIY), 152-159 (ERERLPAH), 160-167 (KRESLLAH), 168-175 (ERESLLAH), 176-182 (ERDILVP), 183-190 (QREMSFVP), 191-198 (EREFLFAS), 199-204 (ERVVLP), 205-214 (EQEKEILHND), 215-222 (EREVLAVH), 223-230 (KKEILPPF), 231-238 (EKEKVLPL), 241-247 (HRVVPLP), 248-255 (QREIVPPF), 256-262 (QRETLLP), and 263-269 (EEILPVN). Residues 144–269 (KREMLPIYER…LLPEEILPVN (126 aa)) are 16 X approximate tandem repeats.

Belongs to the beta-casein family. As to expression, mammary gland specific. Secreted in milk.

It is found in the secreted. Its function is as follows. Important role in determination of the surface properties of the casein micelles. The sequence is that of Beta-casein (CSN2) from Notamacropus eugenii (Tammar wallaby).